Consider the following 190-residue polypeptide: UPF0725 protein At2g20625 (190 aa).

Belongs to the UPF0725 (EMB2204) family.

The protein is UPF0725 protein At2g20625 of Arabidopsis thaliana (Mouse-ear cress).